A 102-amino-acid chain; its full sequence is Iron-sulfur cluster assembly protein CyaY (102 aa).

This sequence belongs to the frataxin family.

Its function is as follows. Involved in iron-sulfur (Fe-S) cluster assembly. May act as a regulator of Fe-S biogenesis. This Mannheimia succiniciproducens (strain KCTC 0769BP / MBEL55E) protein is Iron-sulfur cluster assembly protein CyaY.